Here is a 481-residue protein sequence, read N- to C-terminus: Phosphoglycerate kinase, chloroplastic (481 aa).

The N-terminal 75 residues, 1–75 (MASATASHTL…SSKPIRGVAS (75 aa)), are a transit peptide targeting the chloroplast. Residues Ala98, Asp99, Asn101, Arg115, Ser137, His138, Gly140, Arg141, Arg196, His228, and Arg229 each coordinate (2R)-3-phosphoglycerate. Gly274 contributes to the ADP binding site. Gly274 serves as a coordination point for CDP. AMP-binding residues include Lys276 and Lys280. Residue Lys280 coordinates ATP. Gly298 provides a ligand contact to ADP. Position 298 (Gly298) interacts with CDP. Residues Gly299 and Gly371 each coordinate AMP. Positions 299 and 371 each coordinate ATP. Positions 396 and 401 each coordinate CDP. Phe401 provides a ligand contact to ADP. Position 402 (Glu402) interacts with AMP. Glu402, Asp433, and Ser434 together coordinate ATP. A Mg(2+)-binding site is contributed by Asp433.

It belongs to the phosphoglycerate kinase family. As to quaternary structure, monomer. Requires Mg(2+) as cofactor.

The protein localises to the plastid. It is found in the chloroplast. It carries out the reaction (2R)-3-phosphoglycerate + ATP = (2R)-3-phospho-glyceroyl phosphate + ADP. It functions in the pathway carbohydrate biosynthesis; Calvin cycle. This chain is Phosphoglycerate kinase, chloroplastic, found in Nicotiana tabacum (Common tobacco).